Here is a 62-residue protein sequence, read N- to C-terminus: Sperm protamine P1 (62 aa).

A disordered region spans residues 1–62 (MARYRHSRSR…RYSRRRRRRY (62 aa)).

It belongs to the protamine P1 family. In terms of tissue distribution, testis.

It localises to the nucleus. It is found in the chromosome. Its function is as follows. Protamines substitute for histones in the chromatin of sperm during the haploid phase of spermatogenesis. They compact sperm DNA into a highly condensed, stable and inactive complex. The polypeptide is Sperm protamine P1 (PRM1) (Wallabia bicolor (Swamp wallaby)).